We begin with the raw amino-acid sequence, 930 residues long: Translation initiation factor IF-2 (930 aa).

Residues 50–67 show a composition bias toward low complexity; sequence FKPAAAPKVEAKPAAPKV. 2 disordered regions span residues 50-217 and 260-346; these read FKPA…SSEE and EVVP…HELP. Composition is skewed to basic and acidic residues over residues 68–90 and 110–125; these read SAEK…EAKP and FKAE…AERR. Over residues 129 to 141 the composition is skewed to low complexity; that stretch reads KGNNRDQQQNGNR. 2 stretches are compositionally biased toward basic and acidic residues: residues 157 to 167 and 262 to 295; these read RDNRRFNDQAK and VPEK…DGPR. Positions 309 to 318 are enriched in low complexity; sequence NQKNSNWNNN. Positions 337–346 are enriched in basic and acidic residues; the sequence is VTERKFHELP. The 168-residue stretch at 432–599 folds into the tr-type G domain; sequence ERPPVVTIMG…TVLLVAEIQE (168 aa). The segment at 441-448 is G1; sequence GHVDHGKT. 441-448 is a GTP binding site; sequence GHVDHGKT. Positions 466-470 are G2; sequence GITQH. The segment at 487–490 is G3; that stretch reads DTPG. GTP contacts are provided by residues 487-491 and 541-544; these read DTPGH and NKID. Residues 541–544 form a G4 region; the sequence is NKID. Residues 577–579 are G5; that stretch reads SAK.

This sequence belongs to the TRAFAC class translation factor GTPase superfamily. Classic translation factor GTPase family. IF-2 subfamily.

The protein resides in the cytoplasm. Its function is as follows. One of the essential components for the initiation of protein synthesis. Protects formylmethionyl-tRNA from spontaneous hydrolysis and promotes its binding to the 30S ribosomal subunits. Also involved in the hydrolysis of GTP during the formation of the 70S ribosomal complex. The protein is Translation initiation factor IF-2 of Streptococcus pneumoniae (strain ATCC 700669 / Spain 23F-1).